The chain runs to 591 residues: Serine/threonine-protein kinase Nek2 (591 aa).

Positions 4–258 (YEVLEQIGKG…AAQLLKHPQL (255 aa)) constitute a Protein kinase domain. ATP-binding positions include 10–18 (IGKGAFGSA) and K33. The Proton acceptor role is filled by D129. Disordered regions lie at residues 309-331 (LGNERTVTFSKPSPERNSVSSTR), 382-408 (ARNQLEPPKTSYNRTYRSELPSKTTPN), and 500-534 (RTDGDNGSDSSGRNATAASSRGSNDSRQQRFDTSS). Polar residues-rich tracts occupy residues 391–408 (TSYNRTYRSELPSKTTPN) and 504–534 (DNGSDSSGRNATAASSRGSNDSRQQRFDTSS).

It belongs to the protein kinase superfamily. NEK Ser/Thr protein kinase family. NIMA subfamily. As to expression, expressed in anthers, pistils and leaves.

The enzyme catalyses L-seryl-[protein] + ATP = O-phospho-L-seryl-[protein] + ADP + H(+). It carries out the reaction L-threonyl-[protein] + ATP = O-phospho-L-threonyl-[protein] + ADP + H(+). Functionally, may be involved in plant development processes. In Oryza sativa subsp. japonica (Rice), this protein is Serine/threonine-protein kinase Nek2.